The chain runs to 385 residues: Putative actin-25 (385 aa).

The protein belongs to the actin family.

The protein localises to the cytoplasm. It is found in the cytoskeleton. It carries out the reaction ATP + H2O = ADP + phosphate + H(+). Functionally, actins are highly conserved proteins that are involved in various types of cell motility and are ubiquitously expressed in all eukaryotic cells. Multiple isoforms are involved in various cellular functions such as cytoskeleton structure, cell mobility, chromosome movement and muscle contraction. This Dictyostelium discoideum (Social amoeba) protein is Putative actin-25 (act25).